Reading from the N-terminus, the 185-residue chain is MILGLGNPGLEFSLTRHNVGFSLLDRIISKNGLFLKRKKKYEYSEMRMISGRVILVKPLTYMNLSGSLFPSIFSDFYMCIKNLLVVLDNVDLPLGKCRLKERGGASTHNGLKSISSILGSSNYSRLYIGVGSNVMRDIKSFVLSRFCKDEIDRLEKLYDFLSDELIDISEANFKNKVQKINSSNF.

Position 12 (Phe12) interacts with tRNA. The active-site Proton acceptor is the His17. 3 residues coordinate tRNA: Tyr61, Asn63, and Asn109.

The protein belongs to the PTH family. In terms of assembly, monomer.

The protein resides in the cytoplasm. It catalyses the reaction an N-acyl-L-alpha-aminoacyl-tRNA + H2O = an N-acyl-L-amino acid + a tRNA + H(+). Functionally, hydrolyzes ribosome-free peptidyl-tRNAs (with 1 or more amino acids incorporated), which drop off the ribosome during protein synthesis, or as a result of ribosome stalling. In terms of biological role, catalyzes the release of premature peptidyl moieties from peptidyl-tRNA molecules trapped in stalled 50S ribosomal subunits, and thus maintains levels of free tRNAs and 50S ribosomes. The chain is Peptidyl-tRNA hydrolase from Borrelia garinii subsp. bavariensis (strain ATCC BAA-2496 / DSM 23469 / PBi) (Borreliella bavariensis).